The following is a 607-amino-acid chain: MIEKLRNIAIIAHVDHGKTTLVDKLLQQSGTFDSRAETQERVMDSNDLEKERGITILAKNTAIKWNDYRINIVDTPGHADFGGEVERVMSMVDSVLLVVDAFDGPMPQTRFVTKKAFAYGLKPIVVINKVDRPGARPDWVVDQVFDLFVNLDATDEQLDFPIVYASALNGIAGLDHEDMAEDMTPLYQAIVDHVPAPDVDLDGPFQMQISQLDYNSYVGVIGIGRIKRGKVKPNQQVTIIDSEGKTRNAKVGKVLGHLGLERIETDLAEAGDIVAITGLGELNISDTVCDTQNVEALPALSVDEPTVSMFFCVNTSPFCGKEGKFVTSRQILDRLNKELVHNVALRVEETEDADAFRVSGRGELHLSVLIENMRREGFELAVSRPKVIFREIDGRKQEPYENVTLDVEEQHQGSVMQALGERKGDLKNMNPDGKGRVRLDYVIPSRGLIGFRSEFMTMTSGTGLLYSTFSHYDDVRPGEVGQRQNGVLISNGQGKAVAFALFGLQDRGKLFLGHGAEVYEGQIIGIHSRSNDLTVNCLTGKKLTNMRASGTDEAVVLVPPIRMTLEQALEFIDDDELVEVTPTSIRIRKRHLTENDRRRANRAPKDD.

Residues 3 to 198 (EKLRNIAIIA…AIVDHVPAPD (196 aa)) enclose the tr-type G domain. Residues 15 to 20 (DHGKTT) and 128 to 131 (NKVD) each bind GTP.

It belongs to the TRAFAC class translation factor GTPase superfamily. Classic translation factor GTPase family. BipA subfamily. Monomer.

The protein localises to the cytoplasm. It carries out the reaction GTP + H2O = GDP + phosphate + H(+). A 50S ribosomal subunit assembly protein with GTPase activity, required for 50S subunit assembly at low temperatures, may also play a role in translation. Binds GTP and analogs. Binds the 70S ribosome between the 30S and 50S subunits, in a similar position as ribosome-bound EF-G; it contacts a number of ribosomal proteins, both rRNAs and the A-site tRNA. The chain is Large ribosomal subunit assembly factor BipA from Shigella flexneri.